A 390-amino-acid chain; its full sequence is Manganese peroxidase 2 (390 aa).

The signal sequence occupies residues 1-23 (MAFNFAAILAFVSLAAVTSAAPS). 5 disulfides stabilise this stretch: Cys-27–Cys-39, Cys-38–Cys-313, Cys-57–Cys-141, Cys-277–Cys-343, and Cys-365–Cys-372. Residues Glu-59 and Glu-63 each contribute to the Mn(2+) site. Residue His-70 is the Proton acceptor of the active site. Positions 71, 86, 88, and 90 each coordinate Ca(2+). A glycan (N-linked (GlcNAc...) asparagine) is linked at Asn-155. Residue His-197 coordinates heme b. Residue Ser-198 coordinates Ca(2+). Mn(2+) is bound at residue Asp-203. Residues Asp-215, Thr-217, and Asp-222 each contribute to the Ca(2+) site. Asn-241 carries an N-linked (GlcNAc...) asparagine glycan.

This sequence belongs to the peroxidase family. Ligninase subfamily. Requires heme b as cofactor. Ca(2+) is required as a cofactor.

Its subcellular location is the secreted. It catalyses the reaction 2 Mn(2+) + H2O2 + 2 H(+) = 2 Mn(3+) + 2 H2O. Its function is as follows. Catalyzes the oxidation of Mn(2+) to Mn(3+). The latter, acting as a diffusible redox mediator, is capable of oxidizing a variety of lignin compounds. This Phlebia radiata (White-rot fungus) protein is Manganese peroxidase 2 (mnp2).